A 987-amino-acid chain; its full sequence is UPF0182 protein DIP0733 (987 aa).

Transmembrane regions (helical) follow at residues 19–39, 63–83, 115–135, 176–196, 212–234, 261–281, and 290–310; these read LTWLIPLLMILGALVPTVVDL, IGLFVGFGLLAGIVTFLAGWF, FLVVLPVVIGIAAGFLGQQAW, SVLLVVAFLIALVGHYLLGGI, YAKVQLAVTGGLYLLVRMASYWL, AKIVLLVISAVVAISFFSVIV, and ISTVLMIVSSLAIGNAWPIMM. Residues 904–927 show a composition bias toward basic and acidic residues; it reads DLGEAKGLKPESQNRDKPEDKEGK. The segment at 904–950 is disordered; sequence DLGEAKGLKPESQNRDKPEDKEGKAPSTPSAPASGSGTTGEAIGKIN. Over residues 928–943 the composition is skewed to low complexity; the sequence is APSTPSAPASGSGTTG.

This sequence belongs to the UPF0182 family.

The protein localises to the cell membrane. In Corynebacterium diphtheriae (strain ATCC 700971 / NCTC 13129 / Biotype gravis), this protein is UPF0182 protein DIP0733.